A 234-amino-acid polypeptide reads, in one-letter code: MLFSPPLQRATLIQRYKRFLADVITPDGTTLTLHCPNTGAMTGCATPGDTVWYSTSENTKRKYPHTWELTETQFGAFICVNTLRANQLTKEAIQENRLPALEGYNILKSEVKYGAERSRIDFMLQADFRPDCYIEVKSVTLAEKENGYFPDAITERGQKHLRELMGVAAAGHRAVVVFAVLHSAITRFSPARHIDIKYAQLLSEAQNKGVEVLAYKAELSAQKMELNEPVPITL.

A DNA-binding region (H-T-H motif) is located at residues 201 to 220 (LLSEAQNKGVEVLAYKAELS).

This sequence belongs to the SfsA family.

Its function is as follows. Binds to DNA non-specifically. Could be a regulatory factor involved in maltose metabolism. In Salmonella agona (strain SL483), this protein is Sugar fermentation stimulation protein A.